Consider the following 691-residue polypeptide: Elongation factor G (691 aa).

The tr-type G domain occupies 8–283; that stretch reads EDYRNFGIMA…AVVDYLPSPV (276 aa). GTP-binding positions include 17-24, 81-85, and 135-138; these read AHIDAGKT, DTPGH, and NKMD.

It belongs to the TRAFAC class translation factor GTPase superfamily. Classic translation factor GTPase family. EF-G/EF-2 subfamily.

It localises to the cytoplasm. In terms of biological role, catalyzes the GTP-dependent ribosomal translocation step during translation elongation. During this step, the ribosome changes from the pre-translocational (PRE) to the post-translocational (POST) state as the newly formed A-site-bound peptidyl-tRNA and P-site-bound deacylated tRNA move to the P and E sites, respectively. Catalyzes the coordinated movement of the two tRNA molecules, the mRNA and conformational changes in the ribosome. The protein is Elongation factor G of Methylorubrum populi (strain ATCC BAA-705 / NCIMB 13946 / BJ001) (Methylobacterium populi).